The sequence spans 928 residues: DNA polymerase I (928 aa).

Residues 1–323 (MVQIPENPLI…IDESPSEPAA (323 aa)) enclose the 5'-3' exonuclease domain. Residues 324–517 (ALSYENYVTI…LHLKMWPELQ (194 aa)) form the 3'-5' exonuclease domain. The klenow fragment stretch occupies residues 324 to 928 (ALSYENYVTI…GSGENWDQAH (605 aa)). Residues 521–928 (GPLNVFENIE…GSGENWDQAH (408 aa)) are polymerase.

Belongs to the DNA polymerase type-A family. As to quaternary structure, single-chain monomer with multiple functions.

It catalyses the reaction DNA(n) + a 2'-deoxyribonucleoside 5'-triphosphate = DNA(n+1) + diphosphate. Functionally, in addition to polymerase activity, this DNA polymerase exhibits 3'-5' and 5'-3' exonuclease activity. It is able to utilize nicked circular duplex DNA as a template and can unwind the parental DNA strand from its template. This chain is DNA polymerase I (polA), found in Salmonella typhimurium (strain LT2 / SGSC1412 / ATCC 700720).